We begin with the raw amino-acid sequence, 483 residues long: Altronate oxidoreductase (483 aa).

18–29 serves as a coordination point for NAD(+); the sequence is IIQFGEGNFLRA.

It belongs to the mannitol dehydrogenase family. UxaB subfamily.

The catalysed reaction is D-altronate + NAD(+) = keto-D-tagaturonate + NADH + H(+). The protein operates within carbohydrate metabolism; pentose and glucuronate interconversion. The protein is Altronate oxidoreductase of Escherichia coli O6:K15:H31 (strain 536 / UPEC).